We begin with the raw amino-acid sequence, 280 residues long: Dihydropteroate synthase (280 aa).

Positions 1–265 (MSPAPVQVMG…DVRASVDAIK (265 aa)) constitute a Pterin-binding domain. Residue Asn13 coordinates Mg(2+). (7,8-dihydropterin-6-yl)methyl diphosphate is bound by residues Asp86, Asn105, Asp177, Lys213, and 253 to 255 (RVH).

The protein belongs to the DHPS family. Homodimer. It depends on Mg(2+) as a cofactor.

It carries out the reaction (7,8-dihydropterin-6-yl)methyl diphosphate + 4-aminobenzoate = 7,8-dihydropteroate + diphosphate. It participates in cofactor biosynthesis; tetrahydrofolate biosynthesis; 7,8-dihydrofolate from 2-amino-4-hydroxy-6-hydroxymethyl-7,8-dihydropteridine diphosphate and 4-aminobenzoate: step 1/2. Functionally, catalyzes the condensation of para-aminobenzoate (pABA) with 6-hydroxymethyl-7,8-dihydropterin diphosphate (DHPt-PP) to form 7,8-dihydropteroate (H2Pte), the immediate precursor of folate derivatives. This is Dihydropteroate synthase (folP1) from Mycobacterium bovis (strain ATCC BAA-935 / AF2122/97).